The sequence spans 526 residues: Butyrophilin subfamily 1 member A1 (526 aa).

The first 26 residues, M1–S26, serve as a signal peptide directing secretion. 2 consecutive Ig-like V-type domains span residues A27–H138 and P148–S234. The Extracellular portion of the chain corresponds to A27 to R242. 2 cysteine pairs are disulfide-bonded: C50–C124 and C164–C218. N-linked (GlcNAc...) asparagine glycans are attached at residues N55 and N215. Residues L243–W269 form a helical membrane-spanning segment. Topologically, residues R270–P526 are cytoplasmic. Positions S285–P479 constitute a B30.2/SPRY domain. The disordered stretch occupies residues I495 to P526. Basic and acidic residues predominate over residues S504–H513. Over residues I517–P526 the composition is skewed to polar residues.

It belongs to the immunoglobulin superfamily. BTN/MOG family. Seems to associate with xanthine dehydrogenase/oxidase. N-glycosylated.

The protein resides in the membrane. It localises to the secreted. Its function is as follows. May function in the secretion of milk-fat droplets. May act as a specific membrane-associated receptor for the association of cytoplasmic droplets with the apical plasma membrane. Inhibits the proliferation of CD4 and CD8 T-cells activated by anti-CD3 antibodies, T-cell metabolism and IL2 and IFNG secretion. The chain is Butyrophilin subfamily 1 member A1 (BTN1A1) from Homo sapiens (Human).